Consider the following 250-residue polypeptide: Pimeloyl-[acyl-carrier protein] methyl ester esterase (250 aa).

Substrate is bound by residues Trp12, 71–72, and 138–142; these read SL and FVALQ. Ser71 functions as the Nucleophile in the catalytic mechanism. Catalysis depends on residues Asp202 and His230. His230 contacts substrate.

This sequence belongs to the AB hydrolase superfamily. Carboxylesterase BioH family. In terms of assembly, monomer.

Its subcellular location is the cytoplasm. The catalysed reaction is 6-carboxyhexanoyl-[ACP] methyl ester + H2O = 6-carboxyhexanoyl-[ACP] + methanol + H(+). Its pathway is cofactor biosynthesis; biotin biosynthesis. Functionally, the physiological role of BioH is to remove the methyl group introduced by BioC when the pimeloyl moiety is complete. It allows to synthesize pimeloyl-ACP via the fatty acid synthetic pathway through the hydrolysis of the ester bonds of pimeloyl-ACP esters. This is Pimeloyl-[acyl-carrier protein] methyl ester esterase from Aromatoleum aromaticum (strain DSM 19018 / LMG 30748 / EbN1) (Azoarcus sp. (strain EbN1)).